The primary structure comprises 518 residues: MPAPSAEVFDRLRNLAAIKDVAARPTRTIDEVFTGKPLTTIPVGTAADVEAAFAEARAAQTDWAKRPVIERAAVIRRYRDLVIENREFLMDLLQAEAGKARWAAQEEIVDLIANANYYARVCVDLLKPRKAQPLLPGIGKTTVCYQPKGVVGVISPWNYPMTLTVSDSVPALVAGNAVVLKPDSQTPYCALACAELLYRAGLPRALYAIVPGPGSVVGTAITDNCDYLMFTGSSATGSRLAEHAGRRLIGFSAELGGKNPMIVARGANLDKVAKAATRACFSNAGQLCISIERIYVEKDIAEEFTRKFGDAVRNMKLGTAYDFSVDMGSLISEAQLKTVSGHVDDATAKGAKVIAGGKARPDIGPLFYEPTVLTNVAPEMECAANETFGPVVSIYPVADVDEAVEKANDTDYGLNASVWAGSTAEGQRIAARLRSGTVNVDEGYAFAWGSLSAPMGGMGLSGVGRRHGPEGLLKYTESQTIATARVFNLDPPFGIPATVWQKSLLPIVRTVMKLPGRR.

NADP(+) is bound by residues 157-158 (WN), 181-184 (KPDS), and 232-233 (GS). The active-site Proton acceptor is the Glu254. Leu255 is an NADP(+) binding site. Residue Cys288 is the Nucleophile of the active site. Glu386 provides a ligand contact to NADP(+).

The protein belongs to the aldehyde dehydrogenase family.

The catalysed reaction is succinate semialdehyde + NADP(+) + H2O = succinate + NADPH + 2 H(+). Functionally, catalyzes the NADP(+)-dependent oxidation of succinate semialdehyde to succinate. Although it has succinate semialdehyde dehydrogenase activity, is likely to act physiologically on a different aldehyde(s). This chain is Putative succinate-semialdehyde dehydrogenase [NADP(+)] 2 (gabD2), found in Mycobacterium bovis (strain ATCC BAA-935 / AF2122/97).